The chain runs to 270 residues: Outer membrane protein P.IIC (270 aa).

The first 25 residues, 1–25 (MQPAKNLLFSSLLFSSLLFSSAARA), serve as a signal peptide directing secretion. Residues 26-35 (ASEDGGRGPY) are Extracellular-facing. A beta stranded transmembrane segment spans residues 36-44 (VQADLAYAA). The Periplasmic portion of the chain corresponds to 45–76 (ERITHDYPKPTGTGKNKISTVSDYFRNIRTHS). Residues 77–85 (VHPRVSVGY) traverse the membrane as a beta stranded segment. Residues 86–89 (DFGS) lie on the Extracellular side of the membrane. Residues 90–96 (WRIAADY) traverse the membrane as a beta stranded segment. Residues 97–142 (ARYRKWNNNKYSVSIKELLRNDNSASGVRGHLNIQTQKTEHQENGT) lie on the Periplasmic side of the membrane. The chain crosses the membrane as a beta stranded span at residues 143–157 (FHAVSSLGLSTIYDF). The Extracellular portion of the chain corresponds to 158-162 (DTGSR). A beta stranded transmembrane segment spans residues 163–173 (FKPYIGMRVAY). The Periplasmic segment spans residues 174–221 (GHVRHQVRSVEQETEIITTYPSNGGGKVSLSSKMPPKSAHHQSNSIRR). The tract at residues 194-217 (PSNGGGKVSLSSKMPPKSAHHQSN) is disordered. The beta stranded transmembrane segment at 222-234 (VGLGVIAGVGFDI) threads the bilayer. Topologically, residues 235–237 (TPN) are extracellular. A beta stranded membrane pass occupies residues 238–246 (LTLDTGYRY). Over 247 to 261 (HNWGRLENTRFKTHE) the chain is Periplasmic. A beta stranded transmembrane segment spans residues 262 to 270 (ASLGMRYRF).

This sequence belongs to the opacity porin family. As to quaternary structure, homotrimer.

The protein resides in the cell outer membrane. In terms of biological role, this protein serves as a porin. This Neisseria gonorrhoeae protein is Outer membrane protein P.IIC (piiC).